The primary structure comprises 547 residues: Chaperonin GroEL (547 aa).

ATP-binding positions include 30–33 (TLGP), K51, 87–91 (DGTTT), G415, and D496. Residues 527-547 (SDKAEPMPMRGGMGGMGGMDF) form a disordered region. Over residues 537–547 (GGMGGMGGMDF) the composition is skewed to gly residues.

The protein belongs to the chaperonin (HSP60) family. In terms of assembly, forms a cylinder of 14 subunits composed of two heptameric rings stacked back-to-back. Interacts with the co-chaperonin GroES.

It localises to the cytoplasm. The enzyme catalyses ATP + H2O + a folded polypeptide = ADP + phosphate + an unfolded polypeptide.. Functionally, together with its co-chaperonin GroES, plays an essential role in assisting protein folding. The GroEL-GroES system forms a nano-cage that allows encapsulation of the non-native substrate proteins and provides a physical environment optimized to promote and accelerate protein folding. The chain is Chaperonin GroEL from Rickettsia rickettsii (strain Sheila Smith).